The chain runs to 411 residues: tRNA (guanine(37)-N(1))-methyltransferase (411 aa).

Residues histidine 216, 254-255, 282-283, and asparagine 303 contribute to the S-adenosyl-L-methionine site; these read DL and DG. A disordered region spans residues 391-411; it reads ERQASKQDDPKRRKVAAENAA.

It belongs to the class I-like SAM-binding methyltransferase superfamily. TRM5/TYW2 family. Monomer.

It is found in the mitochondrion matrix. The protein localises to the nucleus. It localises to the cytoplasm. The enzyme catalyses guanosine(37) in tRNA + S-adenosyl-L-methionine = N(1)-methylguanosine(37) in tRNA + S-adenosyl-L-homocysteine + H(+). Functionally, specifically methylates the N1 position of guanosine-37 in various cytoplasmic and mitochondrial tRNAs. Methylation is not dependent on the nature of the nucleoside 5' of the target nucleoside. This is the first step in the biosynthesis of wybutosine (yW), a modified base adjacent to the anticodon of tRNAs and required for accurate decoding. The polypeptide is tRNA (guanine(37)-N(1))-methyltransferase (Phytophthora infestans (strain T30-4) (Potato late blight agent)).